Reading from the N-terminus, the 210-residue chain is Cancer/testis antigen 2 (210 aa).

Gly residues-rich tracts occupy residues 1-47 (MQAE…GPRG) and 56-66 (PRGGAPRGPHG). Disordered regions lie at residues 1 to 80 (MQAE…PCGA) and 154 to 197 (GLGS…DGCR). Basic and acidic residues predominate over residues 163–177 (QKARDLRTPKHKVSE).

Belongs to the CTAG/PCC1 family. As to expression, testis and very low level in placenta and in some uterus samples. Observed in 25-50% of tumor samples of melanomas, non-small-cell lung carcinomas, bladder, prostate and head and neck cancers.

This Homo sapiens (Human) protein is Cancer/testis antigen 2 (CTAG2).